A 515-amino-acid chain; its full sequence is MMRGEFGEASSLSRSPSSPLQTEPHPQSPKFYRNHYVFSGDHSSYNSSSRFCLRSPSDYSLSSYFSNGLCSSEDGSSQFASPPLDGLMTKYNFGGDDLGLCESFDLLNVGEEDKTHHQTQRSSFGNYEANGDGGFRYYSGFGVDQKDHQISNSWNLGMQSCNMNNYSVPVHGKSGVGALFDHQGISSNPNESLPKVSEFQGYVYFMAKDQHGCRFLQWIFEDGSALDALVIFSEVIPHVVELMMDPFGNYLMQKLLDVCNEEQRTQIILMVTSEPGQLIRISLNAYGTRVVQRLVESIKTRKQISLVKSALRPGFLNLIRDLNGNHVIQRCLQCLSTEDNEFIFEDATKFCIDIATHRHGCCVLQKCIAYSSGLQREKLVTEISRNSLFLAQDPYGNYAVQFVLELRDFSAIAAMLAQLKGHYVELSMQKFSSHMVERCLTHCPESRPQIVRELISVPHFDILIQDPYANFVIQAALAVTKGSLHATLVEVIRPHSILRNNPYCKRIFSRNLLKN.

Residues 1–33 (MMRGEFGEASSLSRSPSSPLQTEPHPQSPKFYR) form a disordered region. The N-terminal 70 residues, 1–70 (MMRGEFGEAS…LSSYFSNGLC (70 aa)), are a transit peptide targeting the chloroplast. The span at 10–20 (SSLSRSPSSPL) shows a compositional bias: low complexity. The 342-residue stretch at 174–515 (SGVGALFDHQ…RIFSRNLLKN (342 aa)) folds into the PUM-HD domain. Pumilio repeat units follow at residues 198–233 (EFQGYVYFMAKDQHGCRFLQWIFEDGSALDALVIFS), 234–269 (EVIPHVVELMMDPFGNYLMQKLLDVCNEEQRTQIIL), 270–308 (MVTSEPGQLIRISLNAYGTRVVQRLVESIKTRKQISLVK), 310–345 (ALRPGFLNLIRDLNGNHVIQRCLQCLSTEDNEFIFE), 346–381 (DATKFCIDIATHRHGCCVLQKCIAYSSGLQREKLVT), 382–417 (EISRNSLFLAQDPYGNYAVQFVLELRDFSAIAAMLA), 418–456 (QLKGHYVELSMQKFSSHMVERCLTHCPESRPQIVRELIS), and 457–490 (VPHFDILIQDPYANFVIQAALAVTKGSLHATLVE).

Its subcellular location is the plastid. The protein resides in the chloroplast. The protein localises to the cytoplasm. Its function is as follows. Sequence-specific RNA-binding protein that regulates translation and mRNA stability by binding the 3'-UTR of target mRNAs. This is Putative pumilio homolog 8, chloroplastic (APUM8) from Arabidopsis thaliana (Mouse-ear cress).